Here is a 1184-residue protein sequence, read N- to C-terminus: DNA-directed RNA polymerase subunit beta (1184 aa).

It belongs to the RNA polymerase beta chain family. The RNAP catalytic core consists of 2 alpha, 1 beta, 1 beta' and 1 omega subunit. When a sigma factor is associated with the core the holoenzyme is formed, which can initiate transcription.

It carries out the reaction RNA(n) + a ribonucleoside 5'-triphosphate = RNA(n+1) + diphosphate. In terms of biological role, DNA-dependent RNA polymerase catalyzes the transcription of DNA into RNA using the four ribonucleoside triphosphates as substrates. The polypeptide is DNA-directed RNA polymerase subunit beta (Fusobacterium nucleatum subsp. nucleatum (strain ATCC 25586 / DSM 15643 / BCRC 10681 / CIP 101130 / JCM 8532 / KCTC 2640 / LMG 13131 / VPI 4355)).